A 147-amino-acid polypeptide reads, in one-letter code: UPF0735 ACT domain-containing protein GTNG_2535 (147 aa).

In terms of domain architecture, ACT spans 69 to 144 (TLFFHLEDRS…FVEKVEIVGS (76 aa)).

The protein belongs to the UPF0735 family.

The protein is UPF0735 ACT domain-containing protein GTNG_2535 of Geobacillus thermodenitrificans (strain NG80-2).